A 261-amino-acid polypeptide reads, in one-letter code: ATP synthase subunit a (261 aa).

Transmembrane regions (helical) follow at residues 30–50, 63–83, 96–116, 125–145, 151–171, 187–207, 214–234, and 235–255; these read VLFT…GLFM, WQVA…ANIG, LFMF…VLGL, IAIT…VGFW, FFSL…IAPI, LFVA…FVIN, LWLG…ISAL, and ELLV…LYIN.

The protein belongs to the ATPase A chain family. In terms of assembly, F-type ATPases have 2 components, CF(1) - the catalytic core - and CF(0) - the membrane proton channel. CF(1) has five subunits: alpha(3), beta(3), gamma(1), delta(1), epsilon(1). CF(0) has three main subunits: a(1), b(2) and c(9-12). The alpha and beta chains form an alternating ring which encloses part of the gamma chain. CF(1) is attached to CF(0) by a central stalk formed by the gamma and epsilon chains, while a peripheral stalk is formed by the delta and b chains.

It localises to the cell inner membrane. In terms of biological role, key component of the proton channel; it plays a direct role in the translocation of protons across the membrane. This Sphingopyxis alaskensis (strain DSM 13593 / LMG 18877 / RB2256) (Sphingomonas alaskensis) protein is ATP synthase subunit a.